Here is a 164-residue protein sequence, read N- to C-terminus: FMN reductase (NADH) RutF (164 aa).

It belongs to the non-flavoprotein flavin reductase family. RutF subfamily.

The enzyme catalyses FMNH2 + NAD(+) = FMN + NADH + 2 H(+). Its function is as follows. Catalyzes the reduction of FMN to FMNH2 which is used to reduce pyrimidine by RutA via the Rut pathway. In Enterobacter sp. (strain 638), this protein is FMN reductase (NADH) RutF.